The chain runs to 606 residues: DNA ligase (606 aa).

An ATP-binding site is contributed by Glu263. The active-site N6-AMP-lysine intermediate is Lys265. ATP-binding residues include Arg270, Arg285, Glu315, Phe355, Arg432, and Lys438.

It belongs to the ATP-dependent DNA ligase family. The cofactor is Mg(2+). Requires Mn(2+) as cofactor.

It carries out the reaction ATP + (deoxyribonucleotide)n-3'-hydroxyl + 5'-phospho-(deoxyribonucleotide)m = (deoxyribonucleotide)n+m + AMP + diphosphate.. The enzyme catalyses ADP + (deoxyribonucleotide)n-3'-hydroxyl + 5'-phospho-(deoxyribonucleotide)m = (deoxyribonucleotide)n+m + AMP + phosphate.. The catalysed reaction is GTP + (deoxyribonucleotide)n-3'-hydroxyl + 5'-phospho-(deoxyribonucleotide)m = (deoxyribonucleotide)n+m + GMP + diphosphate.. In terms of biological role, DNA ligase that seals nicks in double-stranded DNA during DNA replication, DNA recombination and DNA repair. Can use ATP, ADP and GTP, but not CTP, TTP or NAD(+). The sequence is that of DNA ligase from Sulfophobococcus zilligii.